The sequence spans 169 residues: Glutathione peroxidase (169 aa).

Residue selenocysteine 43 is part of the active site. A non-standard amino acid (selenocysteine) is located at residue selenocysteine 43.

This sequence belongs to the glutathione peroxidase family.

It catalyses the reaction 2 glutathione + H2O2 = glutathione disulfide + 2 H2O. The protein is Glutathione peroxidase (GPX1) of Schistosoma mansoni (Blood fluke).